Reading from the N-terminus, the 1070-residue chain is Alpha-glucosidase (1070 aa).

An N-terminal signal peptide occupies residues 1 to 35; that stretch reads MRSIKAASLTPLLAALFTTLSSTLALPSSVWEHQL. 9 N-linked (GlcNAc...) asparagine glycosylation sites follow: Asn-48, Asn-99, Asn-144, Asn-161, Asn-208, Asn-384, Asn-458, Asn-480, and Asn-513. The active-site Nucleophile is Asp-526. Residue Glu-529 is part of the active site. N-linked (GlcNAc...) asparagine glycosylation is found at Asn-544, Asn-566, Asn-574, Asn-578, and Asn-635. The active-site Proton donor is Asp-730. N-linked (GlcNAc...) asparagine glycans are attached at residues Asn-818, Asn-885, Asn-916, Asn-983, Asn-992, Asn-996, Asn-1008, Asn-1029, Asn-1043, and Asn-1052.

Belongs to the glycosyl hydrolase 31 family.

The catalysed reaction is Hydrolysis of terminal, non-reducing (1-&gt;4)-linked alpha-D-glucose residues with release of alpha-D-glucose.. In terms of biological role, hydrolyzes a broad range of alpha-D-linked glucopyranosides, including maltose (alpha-1,4), sucrose (alpha-1,2), isomaltose (alpha-1,6) and turanose (alpha-1,3). In Candida tsukubaensis (Yeast), this protein is Alpha-glucosidase.